Consider the following 799-residue polypeptide: Ribonucleoside-diphosphate reductase large subunit (799 aa).

Residues Thr192, 207–208 (SC), Gly238, 408–412 (NLCAE), and 612–616 (PTAGT) each bind substrate. A disulfide bridge links Cys208 with Cys424. Asn408 functions as the Proton acceptor in the catalytic mechanism. Cys410 functions as the Cysteine radical intermediate in the catalytic mechanism. The active-site Proton acceptor is the Glu412. The interval 765–799 (PDSGDGVGGYKGGDEEPRSPEHAQCESPDRCLSCQ) is disordered. The span at 776–793 (GGDEEPRSPEHAQCESPD) shows a compositional bias: basic and acidic residues.

Belongs to the ribonucleoside diphosphate reductase large chain family. In terms of assembly, heterotetramer composed of a homodimer of the large subunit (R1) and a homodimer of the small subunit (R2). Larger multisubunit protein complex are also active, composed of (R1)n(R2)n.

It carries out the reaction a 2'-deoxyribonucleoside 5'-diphosphate + [thioredoxin]-disulfide + H2O = a ribonucleoside 5'-diphosphate + [thioredoxin]-dithiol. Ribonucleoside-diphosphate reductase holoenzyme provides the precursors necessary for viral DNA synthesis. Allows virus growth in non-dividing cells, as well as reactivation from latency in infected hosts. Catalyzes the biosynthesis of deoxyribonucleotides from the corresponding ribonucleotides. This chain is Ribonucleoside-diphosphate reductase large subunit, found in Equine herpesvirus 2 (strain 86/87) (EHV-2).